Reading from the N-terminus, the 196-residue chain is Adenylate kinase (196 aa).

9–17 (GIPGVGKST) is a binding site for ATP.

The protein belongs to the archaeal adenylate kinase family.

It is found in the cytoplasm. The enzyme catalyses AMP + ATP = 2 ADP. In Thermococcus kodakarensis (strain ATCC BAA-918 / JCM 12380 / KOD1) (Pyrococcus kodakaraensis (strain KOD1)), this protein is Adenylate kinase.